A 143-amino-acid polypeptide reads, in one-letter code: Transcription antitermination protein NusB (143 aa).

Belongs to the NusB family.

Involved in transcription antitermination. Required for transcription of ribosomal RNA (rRNA) genes. Binds specifically to the boxA antiterminator sequence of the ribosomal RNA (rrn) operons. This Desulforapulum autotrophicum (strain ATCC 43914 / DSM 3382 / VKM B-1955 / HRM2) (Desulfobacterium autotrophicum) protein is Transcription antitermination protein NusB.